Consider the following 343-residue polypeptide: UDP-3-O-acylglucosamine N-acyltransferase (343 aa).

The active-site Proton acceptor is the His237.

Belongs to the transferase hexapeptide repeat family. LpxD subfamily. In terms of assembly, homotrimer.

It carries out the reaction a UDP-3-O-[(3R)-3-hydroxyacyl]-alpha-D-glucosamine + a (3R)-hydroxyacyl-[ACP] = a UDP-2-N,3-O-bis[(3R)-3-hydroxyacyl]-alpha-D-glucosamine + holo-[ACP] + H(+). The protein operates within bacterial outer membrane biogenesis; LPS lipid A biosynthesis. In terms of biological role, catalyzes the N-acylation of UDP-3-O-acylglucosamine using 3-hydroxyacyl-ACP as the acyl donor. Is involved in the biosynthesis of lipid A, a phosphorylated glycolipid that anchors the lipopolysaccharide to the outer membrane of the cell. This chain is UDP-3-O-acylglucosamine N-acyltransferase, found in Synechococcus sp. (strain JA-3-3Ab) (Cyanobacteria bacterium Yellowstone A-Prime).